Here is a 476-residue protein sequence, read N- to C-terminus: Lactate utilization protein B 1 (476 aa).

4Fe-4S ferredoxin-type domains are found at residues 301 to 331 (GTEFQSVLQCIRCAACINVCPVYRHIGGHAY) and 350 to 379 (YDEYKDLPYASSLCGACTEACPVKIPLHDL). The [4Fe-4S] cluster site is built by C310, C313, C316, C320, C363, C366, and C370.

Belongs to the LutB/YkgF family.

In terms of biological role, is involved in L-lactate degradation and allows cells to grow with lactate as the sole carbon source. Has probably a role as an electron transporter during oxidation of L-lactate. This chain is Lactate utilization protein B 1, found in Bacillus mycoides (strain KBAB4) (Bacillus weihenstephanensis).